The following is a 263-amino-acid chain: 4-hydroxy-tetrahydrodipicolinate reductase (263 aa).

10 to 15 (GASGKM) is an NAD(+) binding site. Arg38 serves as a coordination point for NADP(+). Residues 97–99 (GTT) and 123–126 (APNF) each bind NAD(+). The active-site Proton donor/acceptor is His153. His154 contributes to the (S)-2,3,4,5-tetrahydrodipicolinate binding site. The active-site Proton donor is the Lys157. 163 to 164 (GT) contributes to the (S)-2,3,4,5-tetrahydrodipicolinate binding site.

Belongs to the DapB family.

It localises to the cytoplasm. The catalysed reaction is (S)-2,3,4,5-tetrahydrodipicolinate + NAD(+) + H2O = (2S,4S)-4-hydroxy-2,3,4,5-tetrahydrodipicolinate + NADH + H(+). It catalyses the reaction (S)-2,3,4,5-tetrahydrodipicolinate + NADP(+) + H2O = (2S,4S)-4-hydroxy-2,3,4,5-tetrahydrodipicolinate + NADPH + H(+). It participates in amino-acid biosynthesis; L-lysine biosynthesis via DAP pathway; (S)-tetrahydrodipicolinate from L-aspartate: step 4/4. In terms of biological role, catalyzes the conversion of 4-hydroxy-tetrahydrodipicolinate (HTPA) to tetrahydrodipicolinate. This is 4-hydroxy-tetrahydrodipicolinate reductase from Dehalococcoides mccartyi (strain ATCC BAA-2100 / JCM 16839 / KCTC 5957 / BAV1).